Here is a 329-residue protein sequence, read N- to C-terminus: Octaprenyl diphosphate synthase (329 aa).

Residues lysine 51, arginine 54, and histidine 83 each contribute to the isopentenyl diphosphate site. 2 residues coordinate Mg(2+): aspartate 90 and aspartate 94. Arginine 99 is an an all-trans-polyprenyl diphosphate binding site. An isopentenyl diphosphate-binding site is contributed by arginine 100. Positions 176, 177, and 214 each coordinate an all-trans-polyprenyl diphosphate.

Belongs to the FPP/GGPP synthase family. Requires Mg(2+) as cofactor.

The catalysed reaction is 5 isopentenyl diphosphate + (2E,6E)-farnesyl diphosphate = all-trans-octaprenyl diphosphate + 5 diphosphate. Its function is as follows. Supplies octaprenyl diphosphate, the precursor for the side chain of the isoprenoid quinones ubiquinone and menaquinone. The chain is Octaprenyl diphosphate synthase (ispB) from Haemophilus influenzae (strain ATCC 51907 / DSM 11121 / KW20 / Rd).